A 332-amino-acid chain; its full sequence is Transaldolase (332 aa).

Lys-136 functions as the Schiff-base intermediate with substrate in the catalytic mechanism.

Belongs to the transaldolase family. Type 1 subfamily.

It is found in the cytoplasm. It carries out the reaction D-sedoheptulose 7-phosphate + D-glyceraldehyde 3-phosphate = D-erythrose 4-phosphate + beta-D-fructose 6-phosphate. Its pathway is carbohydrate degradation; pentose phosphate pathway; D-glyceraldehyde 3-phosphate and beta-D-fructose 6-phosphate from D-ribose 5-phosphate and D-xylulose 5-phosphate (non-oxidative stage): step 2/3. Functionally, transaldolase is important for the balance of metabolites in the pentose-phosphate pathway. The chain is Transaldolase from Trichormus variabilis (strain ATCC 29413 / PCC 7937) (Anabaena variabilis).